We begin with the raw amino-acid sequence, 195 residues long: Recombination protein RecR (195 aa).

The C4-type zinc-finger motif lies at 56–71 (CRQCHSFSDDDICPIC). The region spanning 79–174 (SVLCVVETAA…KVTRIAQGIP (96 aa)) is the Toprim domain.

This sequence belongs to the RecR family.

Functionally, may play a role in DNA repair. It seems to be involved in an RecBC-independent recombinational process of DNA repair. It may act with RecF and RecO. In Psychrobacter sp. (strain PRwf-1), this protein is Recombination protein RecR.